We begin with the raw amino-acid sequence, 276 residues long: Glyoxal reductase (276 aa).

The Proton donor role is filled by Tyr-54. A substrate-binding site is contributed by His-112. Residue 190 to 242 (SPLMQGQLLDNEVLTQIAEKHNKSVAQVILRWDLQHGVVTIPKSIKEHRIIEN) participates in NADP(+) binding.

The protein belongs to the aldo/keto reductase family.

It catalyses the reaction (S)-lactaldehyde + NADP(+) = methylglyoxal + NADPH + H(+). Reduces glyoxal and methylglyoxal (2-oxopropanal). Is not involved in the vitamin B6 biosynthesis. In Bacillus subtilis (strain 168), this protein is Glyoxal reductase (yvgN).